The primary structure comprises 184 residues: Shikimate kinase (184 aa).

20-25 provides a ligand contact to ATP; it reads GVGKSR. S24 is a Mg(2+) binding site. Substrate-binding residues include D42, R66, and G88. Residue R127 coordinates ATP. R146 contributes to the substrate binding site. Position 162 (R162) interacts with ATP.

The protein belongs to the shikimate kinase family. In terms of assembly, monomer. Mg(2+) is required as a cofactor.

The protein resides in the cytoplasm. It catalyses the reaction shikimate + ATP = 3-phosphoshikimate + ADP + H(+). The protein operates within metabolic intermediate biosynthesis; chorismate biosynthesis; chorismate from D-erythrose 4-phosphate and phosphoenolpyruvate: step 5/7. Catalyzes the specific phosphorylation of the 3-hydroxyl group of shikimic acid using ATP as a cosubstrate. The sequence is that of Shikimate kinase from Thermus thermophilus (strain ATCC 27634 / DSM 579 / HB8).